A 352-amino-acid chain; its full sequence is Probable dual-specificity RNA methyltransferase RlmN (352 aa).

Glu-93 acts as the Proton acceptor in catalysis. Positions 99–333 (FNYGYSVCVT…IRLERGSSID (235 aa)) constitute a Radical SAM core domain. Cys-106 and Cys-336 are disulfide-bonded. Positions 113, 117, and 120 each coordinate [4Fe-4S] cluster. S-adenosyl-L-methionine is bound by residues 164–165 (GE), Ser-196, and Asn-295. The S-methylcysteine intermediate role is filled by Cys-336.

The protein belongs to the radical SAM superfamily. RlmN family. [4Fe-4S] cluster is required as a cofactor.

The protein localises to the cytoplasm. It catalyses the reaction adenosine(2503) in 23S rRNA + 2 reduced [2Fe-2S]-[ferredoxin] + 2 S-adenosyl-L-methionine = 2-methyladenosine(2503) in 23S rRNA + 5'-deoxyadenosine + L-methionine + 2 oxidized [2Fe-2S]-[ferredoxin] + S-adenosyl-L-homocysteine. It carries out the reaction adenosine(37) in tRNA + 2 reduced [2Fe-2S]-[ferredoxin] + 2 S-adenosyl-L-methionine = 2-methyladenosine(37) in tRNA + 5'-deoxyadenosine + L-methionine + 2 oxidized [2Fe-2S]-[ferredoxin] + S-adenosyl-L-homocysteine. In terms of biological role, specifically methylates position 2 of adenine 2503 in 23S rRNA and position 2 of adenine 37 in tRNAs. This is Probable dual-specificity RNA methyltransferase RlmN from Malacoplasma penetrans (strain HF-2) (Mycoplasma penetrans).